Consider the following 317-residue polypeptide: MAAPMELFCWSGGWGLPSVDLDSLAVLTYARFTGAPLKVHKISNPWRSPSGTLPALRTSHGEVISVPHKIITHLRKEKYNADYDLSARQGADTLAFMSLLEEKLLPVLVHTFWIDTKNYVEVTRKWYAEAMPFPLNFFLPGRMQRQYMERLELLSGEHMPEDEEELEKELYREARECLTLLSQRLGSQKFFFGDAPASLDAFVFSYLALLLQAKLPSGKLQAHLRGLHNLCAYCTHILSLYFPWDGAEVPPPRQTPAGPETEEEPYRRRNQILSVLAGLAAMVGYALLSGIVSIQRATPARAPGTRALGMAEEDEEE.

Glycyl lysine isopeptide (Lys-Gly) (interchain with G-Cter in ubiquitin) cross-links involve residues Lys38, Lys41, and Lys78. A helical transmembrane segment spans residues 164-184 (EELEKELYREARECLTLLSQR).

This sequence belongs to the metaxin family. As to quaternary structure, interacts with MTX2/metaxin-2. Associates with the mitochondrial contact site and cristae organizing system (MICOS) complex, composed of at least MICOS10/MIC10, CHCHD3/MIC19, CHCHD6/MIC25, APOOL/MIC27, IMMT/MIC60, APOO/MIC23/MIC26 and QIL1/MIC13. This complex was also known under the names MINOS or MitOS complex. The MICOS complex associates with mitochondrial outer membrane proteins SAMM50, MTX1 and MTX2 (together described as components of the mitochondrial outer membrane sorting assembly machinery (SAM) complex) and DNAJC11, mitochondrial inner membrane protein TMEM11 and with HSPA9. The MICOS and SAM complexes together with DNAJC11 are part of a large protein complex spanning both membranes termed the mitochondrial intermembrane space bridging (MIB) complex. Interacts with ARMC1. Post-translationally, ubiquitinated by PRKN during mitophagy, leading to its degradation and enhancement of mitophagy. Deubiquitinated by USP30.

Its subcellular location is the mitochondrion outer membrane. Its function is as follows. Involved in transport of proteins into the mitochondrion. Essential for embryonic development. This chain is Metaxin-1 (MTX1), found in Macaca fascicularis (Crab-eating macaque).